We begin with the raw amino-acid sequence, 384 residues long: uncharacterized protein (384 aa).

This sequence to S.pombe SpAC2E11.17.

This is an uncharacterized protein from Schizosaccharomyces pombe (strain 972 / ATCC 24843) (Fission yeast).